The chain runs to 207 residues: 23 kDa calcium-binding protein (207 aa).

M1 is modified (blocked amino end (Met)). EF-hand domains follow at residues 17-52 (AKLD…TFEN), 60-95 (VTAD…CLKK), 119-154 (MKLD…TYKQ), and 161-196 (PTEA…GLKK). Ca(2+) contacts are provided by D30, N32, N34, T36, E41, D73, D75, N77, E84, D132, D134, S136, Q138, E143, D174, D176, N178, T180, and E185.

Expected to play a crucial role in calcium-dependent regulation of ciliary movement. The sequence is that of 23 kDa calcium-binding protein from Tetrahymena thermophila.